The sequence spans 452 residues: Growth/differentiation factor 6 (452 aa).

Residues 1–22 (MDTPRVLLWAIFLISFLWDLPG) form the signal peptide. Residues 23–332 (FQQASISSSS…LPSPGRRRRR (310 aa)) constitute a propeptide that is removed on maturation. Residues 29-93 (SSSSSTELDS…QEPPGRGPRV (65 aa)) form a disordered region. Basic and acidic residues-rich tracts occupy residues 37-46 (DSTKDVENRK) and 58-75 (AEGRTPKEHRPRPNELRR). A glycan (N-linked (GlcNAc...) asparagine) is linked at Asn-115. 2 disordered regions span residues 244 to 267 (RDSGARPRGPQQSPPLDLRSLGFG) and 301 to 348 (AEAA…KKSR). Residues 301-317 (AEAAGAEGSWPAPSGAP) show a composition bias toward low complexity. Over residues 327–348 (GRRRRRTALSSRHGKRHGKKSR) the composition is skewed to basic residues. 3 disulfide bridges follow: Cys-351/Cys-417, Cys-380/Cys-449, and Cys-384/Cys-451.

It belongs to the TGF-beta family. As to quaternary structure, homodimer; disulfide-linked.

The protein resides in the secreted. Functionally, growth factor that controls proliferation and cellular differentiation in the retina and bone formation. Plays a key role in regulating apoptosis during retinal development. Establishes dorsal-ventral positional information in the retina and controls the formation of the retinotectal map. Required for normal formation of bones and joints in the limbs, skull, digits and axial skeleton. Plays a key role in establishing boundaries between skeletal elements during development. Regulation of GDF6 expression seems to be a mechanism for evolving species-specific changes in skeletal structures. Seems to positively regulate differentiation of chondrogenic tissue through the growth factor receptors subunits BMPR1A, BMPR1B, BMPR2 and ACVR2A, leading to the activation of SMAD1-SMAD5-SMAD8 complex. The regulation of chondrogenic differentiation is inhibited by NOG. Also involved in the induction of adipogenesis from mesenchymal stem cells. This mechanism acts through the growth factor receptors subunits BMPR1A, BMPR2 and ACVR2A and the activation of SMAD1-SMAD5-SMAD8 complex and MAPK14/p38. The protein is Growth/differentiation factor 6 (Gdf6) of Rattus norvegicus (Rat).